A 424-amino-acid polypeptide reads, in one-letter code: Tyrosine--tRNA ligase (424 aa).

Y37 is an L-tyrosine binding site. The short motif at 42–51 is the 'HIGH' region element; sequence PTADSLHLGH. The L-tyrosine site is built by Y175 and Q179. The short motif at 235 to 239 is the 'KMSKS' region element; it reads KFGKT. K238 lines the ATP pocket. The S4 RNA-binding domain occupies 357 to 414; it reads ADLQQALVAAELVPSRGQARTLISSNAVSVNGEKQASIDYVFDDADRLYSRYTLLRRG.

The protein belongs to the class-I aminoacyl-tRNA synthetase family. TyrS type 1 subfamily. As to quaternary structure, homodimer.

It is found in the cytoplasm. The enzyme catalyses tRNA(Tyr) + L-tyrosine + ATP = L-tyrosyl-tRNA(Tyr) + AMP + diphosphate + H(+). In terms of biological role, catalyzes the attachment of tyrosine to tRNA(Tyr) in a two-step reaction: tyrosine is first activated by ATP to form Tyr-AMP and then transferred to the acceptor end of tRNA(Tyr). The polypeptide is Tyrosine--tRNA ligase (Sodalis glossinidius (strain morsitans)).